We begin with the raw amino-acid sequence, 218 residues long: Small ribosomal subunit protein uS3 (218 aa).

The KH type-2 domain maps to 43–113; the sequence is IREHIERKLA…KVQVNVREVS (71 aa).

Belongs to the universal ribosomal protein uS3 family. In terms of assembly, part of the 30S ribosomal subunit. Forms a tight complex with proteins S10 and S14.

In terms of biological role, binds the lower part of the 30S subunit head. Binds mRNA in the 70S ribosome, positioning it for translation. The sequence is that of Small ribosomal subunit protein uS3 from Rubrobacter xylanophilus (strain DSM 9941 / JCM 11954 / NBRC 16129 / PRD-1).